The chain runs to 426 residues: MPSIDVVVAREILDSRGNPTVEVEVGLDDGSTGRAAVPSGASTGAFEAIELRDGDPSRYLGKGVEKAVLAVIEQIGPELVGYDATEQRLIDQAMFDLDATDNKGSLGANAILGVSLAVAHAASEASDLPLFRYLGGPNAHLLPVPMMNILNGGSHADSNVDIQEFMIAPIGAESFSEALRWGAEVYHTLKKVLKNKGLATGLGDEGGFAPNLGSNREALDLILEAIKEAGYTPGEQIALALDVAASEFYKDGSYAFEGKNRSAAEMTEYYAELVEAYPLVSIEDPLFEDDWDGWNTITAKLGDKVQLVGDDLFVTNPERLARGIEENSANALLVKVNQIGSLTETLDAVELAQRNGFKCMMSHRSGETEDVTIADLAVATNCGQIKTGAPARSERVAKYNQLLRIEEILDDAAVYAGRSAFPRFKG.

Gln-163 contributes to the (2R)-2-phosphoglycerate binding site. The active-site Proton donor is the Glu-205. Mg(2+)-binding residues include Asp-242, Glu-283, and Asp-310. Residues Lys-335, Arg-364, Ser-365, and Lys-386 each contribute to the (2R)-2-phosphoglycerate site. Lys-335 acts as the Proton acceptor in catalysis.

Belongs to the enolase family. It depends on Mg(2+) as a cofactor.

The protein resides in the cytoplasm. It localises to the secreted. It is found in the cell surface. It catalyses the reaction (2R)-2-phosphoglycerate = phosphoenolpyruvate + H2O. It participates in carbohydrate degradation; glycolysis; pyruvate from D-glyceraldehyde 3-phosphate: step 4/5. In terms of biological role, catalyzes the reversible conversion of 2-phosphoglycerate (2-PG) into phosphoenolpyruvate (PEP). It is essential for the degradation of carbohydrates via glycolysis. This Streptomyces coelicolor (strain ATCC BAA-471 / A3(2) / M145) protein is Enolase 1.